The primary structure comprises 446 residues: GTPase Der (446 aa).

2 EngA-type G domains span residues 3 to 168 (PVIA…YAGQ) and 181 to 354 (IKIA…KAAM). Residues 9-16 (GRPNVGKS), 57-61 (DTGGF), 120-123 (NKAE), 187-194 (GRPNVGKS), 234-238 (DTAGL), and 299-302 (NKWD) each bind GTP. The KH-like domain occupies 355–439 (SKLPTPKLTR…PLRIEFRSST (85 aa)).

The protein belongs to the TRAFAC class TrmE-Era-EngA-EngB-Septin-like GTPase superfamily. EngA (Der) GTPase family. As to quaternary structure, associates with the 50S ribosomal subunit.

In terms of biological role, GTPase that plays an essential role in the late steps of ribosome biogenesis. This is GTPase Der from Paraburkholderia phymatum (strain DSM 17167 / CIP 108236 / LMG 21445 / STM815) (Burkholderia phymatum).